Here is a 217-residue protein sequence, read N- to C-terminus: FMN-dependent NADH:quinone oxidoreductase (217 aa).

FMN is bound by residues serine 10, 17-19 (SAS), and 137-140 (SRGG).

Belongs to the azoreductase type 1 family. Homodimer. The cofactor is FMN.

The enzyme catalyses 2 a quinone + NADH + H(+) = 2 a 1,4-benzosemiquinone + NAD(+). It catalyses the reaction N,N-dimethyl-1,4-phenylenediamine + anthranilate + 2 NAD(+) = 2-(4-dimethylaminophenyl)diazenylbenzoate + 2 NADH + 2 H(+). Its function is as follows. Quinone reductase that provides resistance to thiol-specific stress caused by electrophilic quinones. Also exhibits azoreductase activity. Catalyzes the reductive cleavage of the azo bond in aromatic azo compounds to the corresponding amines. The polypeptide is FMN-dependent NADH:quinone oxidoreductase (Streptomyces avermitilis (strain ATCC 31267 / DSM 46492 / JCM 5070 / NBRC 14893 / NCIMB 12804 / NRRL 8165 / MA-4680)).